We begin with the raw amino-acid sequence, 259 residues long: Putative electron transfer flavoprotein subunit YgcR (259 aa).

This sequence belongs to the ETF beta-subunit/FixA family. YgcQ and YgcR form a heterodimer.

In terms of biological role, may play a role in a redox process. This is Putative electron transfer flavoprotein subunit YgcR (ygcR) from Escherichia coli (strain K12).